Reading from the N-terminus, the 790-residue chain is Aryl hydrocarbon receptor nuclear translocator (790 aa).

The segment covering 1–25 (MAATTANPEMTSDVPSLGPNITSGN) has biased composition (polar residues). The segment at 1–98 (MAATTANPEM…LARENHSEIE (98 aa)) is disordered. Alanine 2 carries the N-acetylalanine modification. Lysine 58 is covalently cross-linked (Glycyl lysine isopeptide (Lys-Gly) (interchain with G-Cter in SUMO2)). Residues 60–98 (LRCDEDQMSNDKERFARSDDEQSSADKERLARENHSEIE) are compositionally biased toward basic and acidic residues. A Phosphoserine modification is found at serine 77. Residues 88-128 (RLARENHSEIERRRRNKMTAYITELSDIVPTCSALARKPDK) are DNA-binding. The bHLH domain maps to 89 to 142 (LARENHSEIERRRRNKMTAYITELSDIVPTCSALARKPDKLTILRMAVSHMKSL). A required for heterodimer formation with HIF1A region spans residues 112-168 (LSDIVPTCSALARKPDKLTILRMAVSHMKSLRGTGNTSTDGSYKPSFLTDQELKHLI). The required for heterodimer formation with EPAS1 stretch occupies residues 112–264 (LSDIVPTCSA…MCMGSRRSFI (153 aa)). PAS domains lie at 161–235 (DQEL…LTGR) and 349–419 (PNCT…VKLK). Residues 167-171 (LILEA) form a mediates the transcription activity and dimerization of the AHR:ARNT complex region. The 44-residue stretch at 424–467 (SVMFRFRSKNREWLWTRTSSFTFQNPYSDEIEYIICTNTNVKNS) folds into the PAC domain. Polar residues-rich tracts occupy residues 465-480 (KNSS…NPIQ) and 629-672 (HSNP…GNFQ). Disordered regions lie at residues 465–494 (KNSS…PLEV), 629–695 (HSNP…AAAY), and 729–790 (QWQG…SFSE). The span at 673–695 (SPSSFSSMSLSSTSTASSGAAAY) shows a compositional bias: low complexity. Positions 741–758 (SSEQHVQQPSTQQPNQPE) are enriched in polar residues.

Monomer. Homodimer only upon binding to a DNA. Efficient DNA binding requires dimerization with another bHLH protein. Interacts with TACC3. Interacts with HIF1A, EPAS1, NPAS1 and NPAS3; forms a heterodimer that binds core DNA sequence 5'-TACGTG-3' within the hypoxia response element (HRE) of target gene promoters. Forms a heterodimer with AHRR, as well as with other bHLH proteins. Interacts with NOCA7. Interacts with TACC3. Interacts with AHR; the heterodimer ARNT:AHR binds to core DNA sequence 5'-TGCGTG-3' within the dioxin response element (DRE) of target gene promoters and activates their transcription. Interacts with SIM1 and NPAS4. Was expressed at almost the same level in all tissues except for the heart, liver, and small intestine.

It is found in the nucleus. Functionally, required for activity of the AHR. Upon ligand binding, AHR translocates into the nucleus, where it heterodimerizes with ARNT and induces transcription by binding to xenobiotic response elements (XRE). Not required for the ligand-binding subunit to translocate from the cytosol to the nucleus after ligand binding. The complex initiates transcription of genes involved in the regulation of a variety of biological processes, including angiogenesis, hematopoiesis, drug and lipid metabolism, cell motility and immune modulation. The heterodimer binds to core DNA sequence 5'-TACGTG-3' within the hypoxia response element (HRE) of target gene promoters and functions as a transcriptional regulator of the adaptive response to hypoxia. The heterodimer ARNT:AHR binds to core DNA sequence 5'-TGCGTG-3' within the dioxin response element (DRE) of target gene promoters and activates their transcription. The polypeptide is Aryl hydrocarbon receptor nuclear translocator (ARNT) (Oryctolagus cuniculus (Rabbit)).